Here is a 97-residue protein sequence, read N- to C-terminus: Aspartyl/glutamyl-tRNA(Asn/Gln) amidotransferase subunit C (97 aa).

It belongs to the GatC family. Heterotrimer of A, B and C subunits.

It catalyses the reaction L-glutamyl-tRNA(Gln) + L-glutamine + ATP + H2O = L-glutaminyl-tRNA(Gln) + L-glutamate + ADP + phosphate + H(+). The enzyme catalyses L-aspartyl-tRNA(Asn) + L-glutamine + ATP + H2O = L-asparaginyl-tRNA(Asn) + L-glutamate + ADP + phosphate + 2 H(+). Functionally, allows the formation of correctly charged Asn-tRNA(Asn) or Gln-tRNA(Gln) through the transamidation of misacylated Asp-tRNA(Asn) or Glu-tRNA(Gln) in organisms which lack either or both of asparaginyl-tRNA or glutaminyl-tRNA synthetases. The reaction takes place in the presence of glutamine and ATP through an activated phospho-Asp-tRNA(Asn) or phospho-Glu-tRNA(Gln). The sequence is that of Aspartyl/glutamyl-tRNA(Asn/Gln) amidotransferase subunit C from Prochlorococcus marinus (strain MIT 9301).